Consider the following 317-residue polypeptide: UV DNA damage endonuclease (317 aa).

The protein belongs to the uve1/UvsE family.

Its function is as follows. Component in a DNA repair pathway. Removal of UV LIGHT damaged nucleotides. Recognizes pyrimidine dimers and cleave a phosphodiester bond immediately 5' to the lesion. This is UV DNA damage endonuclease from Bacillus cereus (strain ATCC 10987 / NRS 248).